The sequence spans 173 residues: uncharacterized protein (173 aa).

A propeptide spans 1–15 (MERKLSQRAGNTFKG) (leader sequence). Position 16 is an N-methylphenylalanine (Phe16). Residues 16–37 (FTLVEVLITLAIISLVFSLILI) traverse the membrane as a helical segment.

It localises to the membrane. This is an uncharacterized protein from Aquifex aeolicus (strain VF5).